A 222-amino-acid chain; its full sequence is Octanoyltransferase (222 aa).

The 176-residue stretch at 32 to 207 (RDRPDVLMLL…AFARVFGVQC (176 aa)) folds into the BPL/LPL catalytic domain. Substrate-binding positions include 72 to 79 (RGGEVTYH), 139 to 141 (ALG), and 152 to 154 (GFA). The active-site Acyl-thioester intermediate is the Cys-170.

This sequence belongs to the LipB family.

It is found in the cytoplasm. It catalyses the reaction octanoyl-[ACP] + L-lysyl-[protein] = N(6)-octanoyl-L-lysyl-[protein] + holo-[ACP] + H(+). Its pathway is protein modification; protein lipoylation via endogenous pathway; protein N(6)-(lipoyl)lysine from octanoyl-[acyl-carrier-protein]: step 1/2. In terms of biological role, catalyzes the transfer of endogenously produced octanoic acid from octanoyl-acyl-carrier-protein onto the lipoyl domains of lipoate-dependent enzymes. Lipoyl-ACP can also act as a substrate although octanoyl-ACP is likely to be the physiological substrate. The chain is Octanoyltransferase from Gloeobacter violaceus (strain ATCC 29082 / PCC 7421).